We begin with the raw amino-acid sequence, 179 residues long: MASSMCGMFPGQQPPGSLPPPGPGGPGQPGLLTGTPGNRGANNTLVDELEASFEACFASLVSQDYVNGTDQEEIRTGVDQCIQKFLDVARQTECFFLQKRLQLSVQKPEQVEKEDASELKNELQRKEMLIQKHLAKIHHWQQVLEDINVQHKKPTELPQGPLAFLEQASANLPAPMKPN.

Positions methionine 1–asparagine 43 are disordered. The span at glutamine 12–proline 26 shows a compositional bias: pro residues. Residues glutamate 109–histidine 139 adopt a coiled-coil conformation.

The protein belongs to the Mediator complex subunit 28 family. Component of the Mediator complex.

It localises to the nucleus. In terms of biological role, component of the Mediator complex, a coactivator involved in the regulated transcription of nearly all RNA polymerase II-dependent genes. Mediator functions as a bridge to convey information from gene-specific regulatory proteins to the basal RNA polymerase II transcription machinery. Mediator is recruited to promoters by direct interactions with regulatory proteins and serves as a scaffold for the assembly of a functional preinitiation complex with RNA polymerase II and the general transcription factors. The sequence is that of Mediator of RNA polymerase II transcription subunit 28 (med28) from Danio rerio (Zebrafish).